The primary structure comprises 185 residues: Ribosome-recycling factor (185 aa).

It belongs to the RRF family.

It localises to the cytoplasm. In terms of biological role, responsible for the release of ribosomes from messenger RNA at the termination of protein biosynthesis. May increase the efficiency of translation by recycling ribosomes from one round of translation to another. In Pseudomonas putida (strain ATCC 700007 / DSM 6899 / JCM 31910 / BCRC 17059 / LMG 24140 / F1), this protein is Ribosome-recycling factor.